The chain runs to 517 residues: Acyltransferase AFT15-1 (517 aa).

H180 serves as the catalytic Proton acceptor.

This sequence belongs to the plant acyltransferase family.

It functions in the pathway mycotoxin biosynthesis. Its function is as follows. Acyltransferase; part of the gene clusters that mediate the biosynthesis of the host-selective toxins (HSTs) AF-toxins responsible for Alternaria black spot of strawberry disease by the strawberry pathotype. AF-toxin I and III are valine derivatives of 2,3-dyhydroxy-isovaleric acid and 2-hydroxy-isovaleric acid respectively, while AF II is an isoleucine derivative of 2-hydroxy-valeric acid. These derivatives are bound to a 9,10-epoxy-8-hydroxy-9-methyl-decatrienoic acid (EDA) moiety. On cellular level, AF-toxins affect plasma membrane of susceptible cells and cause a sudden increase in loss of K(+) after a few minutes of toxin treatment. The aldo-keto reductase AFTS1 catalyzes the conversion of 2-keto-isovaleric acid (2-KIV) to 2-hydroxy-isovaleric acid (2-HIV) by reduction of its ketone to an alcohol. The acyl-CoA ligase AFT1, the hydrolase AFT2 and the enoyl-CoA hydratases AFT3 and AFT6, but also the polyketide synthase AFT9, the acyl-CoA dehydrogenase AFT10, the cytochrome P450 monooxygenase AFT11 and the oxidoreductase AFT12 are all involved in the biosynthesis of the AK-, AF- and ACT-toxin common EDA structural moiety. The exact function of each enzyme, and of additional enzymes identified within the AF-toxin clusters have still to be determined. This chain is Acyltransferase AFT15-1 (AFT15-1), found in Alternaria alternata (Alternaria rot fungus).